The following is a 317-amino-acid chain: Transaldolase (317 aa).

Lys132 (schiff-base intermediate with substrate) is an active-site residue.

It belongs to the transaldolase family. Type 1 subfamily. As to quaternary structure, homodimer.

The protein localises to the cytoplasm. The enzyme catalyses D-sedoheptulose 7-phosphate + D-glyceraldehyde 3-phosphate = D-erythrose 4-phosphate + beta-D-fructose 6-phosphate. Its pathway is carbohydrate degradation; pentose phosphate pathway; D-glyceraldehyde 3-phosphate and beta-D-fructose 6-phosphate from D-ribose 5-phosphate and D-xylulose 5-phosphate (non-oxidative stage): step 2/3. Transaldolase is important for the balance of metabolites in the pentose-phosphate pathway. The chain is Transaldolase from Shewanella frigidimarina (strain NCIMB 400).